Reading from the N-terminus, the 420-residue chain is Na(+)/H(+) antiporter NhaA (420 aa).

Transmembrane regions (helical) follow at residues 4–24 (VWNFITGYSLLLIGGAIIALI), 70–90 (DLLMALFFAIAAKEVWEAVIL), 104–124 (LVATLGGMVGPISIYLGIAYF), 132–152 (AVANGWAIPTATDIAFSYLVG), 165–185 (FLLLLAIADDAAGLLILAIFY), 192–212 (PAWLLLSFGAALGVYVLANWL), 233–250 (LSFWPYALAGCASWYGFM), 299–319 (VEIILGLFGLMNAGVAFSAMG), 323–343 (WLVLAGLLIGKPVGIFLFGWL), 361–381 (LVVIGCVAAIGFTVSLFVASV), and 395–415 (GALFSFGAAAVSIIVGKLTQV).

This sequence belongs to the NhaA Na(+)/H(+) (TC 2.A.33) antiporter family.

It localises to the cell inner membrane. It catalyses the reaction Na(+)(in) + 2 H(+)(out) = Na(+)(out) + 2 H(+)(in). Its function is as follows. Na(+)/H(+) antiporter that extrudes sodium in exchange for external protons. This Jannaschia sp. (strain CCS1) protein is Na(+)/H(+) antiporter NhaA.